A 224-amino-acid chain; its full sequence is SPI-2 type 3 secretion system stator protein (224 aa).

This sequence belongs to the SctL stator family. In terms of assembly, the core secretion machinery of the T3SS is composed of approximately 20 different proteins, including cytoplasmic components, a base, an export apparatus and a needle. This subunit is part of the cytosolic complex. Interacts directly with SsaN/SctN2 (T3SS-2 ATPase).

The protein resides in the cytoplasm. Functionally, component of the type III secretion system (T3SS), also called injectisome, which is used to inject bacterial effector proteins into eukaryotic host cells. Acts as a regulator of the SsaN/SctN2 ATPase activity. This Salmonella typhimurium (strain LT2 / SGSC1412 / ATCC 700720) protein is SPI-2 type 3 secretion system stator protein.